A 282-amino-acid chain; its full sequence is 2-dehydro-3-deoxyphosphooctonate aldolase (282 aa).

It belongs to the KdsA family.

The protein resides in the cytoplasm. It catalyses the reaction D-arabinose 5-phosphate + phosphoenolpyruvate + H2O = 3-deoxy-alpha-D-manno-2-octulosonate-8-phosphate + phosphate. Its pathway is carbohydrate biosynthesis; 3-deoxy-D-manno-octulosonate biosynthesis; 3-deoxy-D-manno-octulosonate from D-ribulose 5-phosphate: step 2/3. It functions in the pathway bacterial outer membrane biogenesis; lipopolysaccharide biosynthesis. This chain is 2-dehydro-3-deoxyphosphooctonate aldolase, found in Chromobacterium violaceum (strain ATCC 12472 / DSM 30191 / JCM 1249 / CCUG 213 / NBRC 12614 / NCIMB 9131 / NCTC 9757 / MK).